Reading from the N-terminus, the 551-residue chain is Methyl-accepting chemotaxis protein I (551 aa).

Topologically, residues 1–6 (MLKRIK) are cytoplasmic. The helical transmembrane segment at 7 to 30 (IVTSLLLVLAVFGLLQLTSGGLFF) threads the bilayer. Residues 31–190 (NALKNDKENF…AVSDNNASYS (160 aa)) lie on the Periplasmic side of the membrane. A the 3 Arg may form a positively charged pocket, which binds the alpha-carboxyl group of the attractant AA region spans residues 64–73 (RNTLNRAGIR). Residues 191–210 (QAMWILVGVMIVVLAVIFAV) form a helical membrane-spanning segment. Residues 211-551 (WFGIKASLVA…ADSEENWETF (341 aa)) lie on the Cytoplasmic side of the membrane. Positions 216 to 268 (ASLVAPMNRLIDSIRHIAGGDLVKPIEVDGSNEMGQLAESLRHMQGELMRTVG) constitute an HAMP domain. Residues 273 to 502 (GANAIYSGAS…ESAAAAAALE (230 aa)) enclose the Methyl-accepting transducer domain. Gln-297 is subject to Glutamate methyl ester (Gln). Position 304 is a glutamate methyl ester (Glu) (Glu-304). A Glutamate methyl ester (Gln) modification is found at Gln-311. Glutamate methyl ester (Glu) is present on residues Glu-493 and Glu-502.

This sequence belongs to the methyl-accepting chemotaxis (MCP) protein family.

It localises to the cell inner membrane. In terms of biological role, receptor for the attractant L-serine and related amino acids. Is also responsible for chemotaxis away from a wide range of repellents, including leucine, indole, and weak acids. Functionally, chemotactic-signal transducers respond to changes in the concentration of attractants and repellents in the environment, transduce a signal from the outside to the inside of the cell, and facilitate sensory adaptation through the variation of the level of methylation. Attractants increase the level of methylation while repellents decrease the level of methylation, the methyl groups are added by the methyltransferase CheR and removed by the methylesterase CheB. In Escherichia coli (strain K12), this protein is Methyl-accepting chemotaxis protein I (tsr).